A 513-amino-acid chain; its full sequence is Activin receptor type-2A (513 aa).

An N-terminal signal peptide occupies residues 1 to 19; sequence MGAAAKLAFAVFLISCSSG. The Extracellular segment spans residues 20-135; the sequence is AILGRSETQE…TSNPVTPKPP (116 aa). Cystine bridges form between C30/C60, C50/C78, C85/C104, C91/C103, and C105/C110. N-linked (GlcNAc...) asparagine glycosylation is found at N43 and N66. The chain crosses the membrane as a helical span at residues 136 to 161; the sequence is YYNILLYSLVPLMLIAGIVICAFWVY. The Cytoplasmic portion of the chain corresponds to 162–513; that stretch reads RHHKMAYPPV…VDFPPKESSL (352 aa). Residues 192-485 form the Protein kinase domain; sequence LQLLEVKARG…GERITQMQRL (294 aa). Residues 198–206 and K219 contribute to the ATP site; that span reads KARGRFGCV. D322 functions as the Proton acceptor in the catalytic mechanism.

It belongs to the protein kinase superfamily. TKL Ser/Thr protein kinase family. TGFB receptor subfamily. As to quaternary structure, part of a complex consisting of MAGI2/ARIP1, ACVR2A, ACVR1B and SMAD3. Interacts with MAGI2/ARIP1. Interacts with type I receptor ACVR1. Interacts with BMP7. Interacts with TSC22D1/TSC-22. Interacts with activin A/INHBA. Requires Mg(2+) as cofactor. It depends on Mn(2+) as a cofactor.

The protein localises to the cell membrane. It catalyses the reaction L-threonyl-[receptor-protein] + ATP = O-phospho-L-threonyl-[receptor-protein] + ADP + H(+). It carries out the reaction L-seryl-[receptor-protein] + ATP = O-phospho-L-seryl-[receptor-protein] + ADP + H(+). Functionally, on ligand binding, forms a receptor complex consisting of two type II and two type I transmembrane serine/threonine kinases. Type II receptors phosphorylate and activate type I receptors which autophosphorylate, then bind and activate SMAD transcriptional regulators. Receptor for activin A, activin B and inhibin A. Mediates induction of adipogenesis by GDF6. The polypeptide is Activin receptor type-2A (Homo sapiens (Human)).